A 508-amino-acid polypeptide reads, in one-letter code: Dihydroniloticin synthase CYP71CD4 (508 aa).

The chain crosses the membrane as a helical span at residues 6-26 (LDFFSVTSFIIFFLFLFRLVW). Residue cysteine 449 coordinates heme.

It belongs to the cytochrome P450 family. The cofactor is heme. In terms of tissue distribution, mainly expressed in roots and, to a lesser extent, in stems.

Its subcellular location is the membrane. The enzyme catalyses tirucalla-7,24-dien-3beta-ol + 2 reduced [NADPH--hemoprotein reductase] + 2 O2 = dihydroniloticin + 2 oxidized [NADPH--hemoprotein reductase] + 2 H2O + 2 H(+). It participates in secondary metabolite biosynthesis; terpenoid biosynthesis. In terms of biological role, monooxygenase involved in the biosynthesis of quassinoids triterpene natural products such as ailanthone, chaparrinone, glaucarubinone and amarolide, allelopathic degraded triterpene lactones inhibiting the growth of other plants, and possessing antimalarial, antifeedant, insecticidal, anti-inflammatory and anticancer activities. Catalyzes the conversion of tirucalladienol to dihydroniloticin. The sequence is that of Dihydroniloticin synthase CYP71CD4 from Ailanthus altissima (Tree-of-heaven).